A 197-amino-acid polypeptide reads, in one-letter code: RNA-binding protein with multiple splicing (197 aa).

Met-1 is modified (N-acetylmethionine). A Phosphothreonine modification is found at Thr-12. Residues 24-101 (RTLFVSGLPL…QTLRLEFAKA (78 aa)) enclose the RRM domain. The interval 98-105 (FAKANTKM) is interaction with RNA. Position 113 is a phosphothreonine (Thr-113).

In terms of assembly, homodimer; each protein chain binds one RNA molecule via the external surface of the homodimer. Interacts with RNA binding proteins MBNL1, RBFOX2, RBM4 and RBM14; the interaction allows cooperative assembly of stable cell-specific alternative splicing regulatory complexes. Also interacts with RBM47, MATR3 and ESRP2. Interacts with SMAD2, SMAD3 and SMAD4; the interactions are direct. As to expression, mRNA expressed in developing heart, with significantly higher expression in the atria relative to the ventricles.

It is found in the nucleus. It localises to the cytoplasm. Its subcellular location is the stress granule. The protein resides in the P-body. In terms of biological role, RNA binding protein that mediates the regulation of pre-mRNA alternative splicing (AS). Acts either as activator (FLNB, HSPG2, LIPA1, MYOCD, PTPRF and PPFIBP1) or repressor (TPM1, ACTN1, ITGA7, PIEZO1, LSM14B, MBNL1 and MBML2) of splicing events on specific pre-mRNA targets. Together with RNA binding proteins RBFOX2 and MBNL1/2, activates a splicing program associated with differentiated contractile vascular smooth muscle cells (SMC) by regulating AS of numerous pre-mRNA involved in actin cytoskeleton and focal adhesion machineries, suggesting a role in promoting a cell differentiated state. Binds to introns, exons and 3'-UTR associated with tandem CAC trinucleotide motifs separated by a variable spacer region, at a minimum as a dimer. The minimal length of RNA required for RBPMS-binding tandem CAC motifs is 15 nt, with spacing ranging from 1 to 9 nt. Can also bind to CA dinucleotide repeats. Mediates repression of TPM1 exon 3 by binding to CAC tandem repeats in the flanking intronic regions, followed by higher-order oligomerization and heterotypic interactions with other splicing regulators including MBNL1 and RBFOX2, which prevents assembly of ATP-dependent splicing complexes. The protein is RNA-binding protein with multiple splicing of Mus musculus (Mouse).